The sequence spans 336 residues: Formimidoylglutamase (336 aa).

Mn(2+) contacts are provided by His129, Asp160, His162, Asp164, Asp257, and Asp259.

This sequence belongs to the arginase family. Mn(2+) is required as a cofactor.

The enzyme catalyses N-formimidoyl-L-glutamate + H2O = formamide + L-glutamate. It functions in the pathway amino-acid degradation; L-histidine degradation into L-glutamate; L-glutamate from N-formimidoyl-L-glutamate (hydrolase route): step 1/1. Catalyzes the conversion of N-formimidoyl-L-glutamate to L-glutamate and formamide. The sequence is that of Formimidoylglutamase from Vibrio vulnificus (strain CMCP6).